The sequence spans 146 residues: ATP synthase epsilon chain 2 (146 aa).

Belongs to the ATPase epsilon chain family. As to quaternary structure, F-type ATPases have 2 components, CF(1) - the catalytic core - and CF(0) - the membrane proton channel. CF(1) has five subunits: alpha(3), beta(3), gamma(1), delta(1), epsilon(1). CF(0) has three main subunits: a, b and c.

It localises to the cell inner membrane. Its function is as follows. Produces ATP from ADP in the presence of a proton gradient across the membrane. The polypeptide is ATP synthase epsilon chain 2 (Cereibacter sphaeroides (strain ATCC 17023 / DSM 158 / JCM 6121 / CCUG 31486 / LMG 2827 / NBRC 12203 / NCIMB 8253 / ATH 2.4.1.) (Rhodobacter sphaeroides)).